We begin with the raw amino-acid sequence, 37 residues long: Large ribosomal subunit protein bL36 (37 aa).

Belongs to the bacterial ribosomal protein bL36 family.

This chain is Large ribosomal subunit protein bL36, found in Nocardioides sp. (strain ATCC BAA-499 / JS614).